The following is a 176-amino-acid chain: Cell division protein ZapC (176 aa).

It belongs to the ZapC family. Interacts directly with FtsZ.

Its subcellular location is the cytoplasm. In terms of biological role, contributes to the efficiency of the cell division process by stabilizing the polymeric form of the cell division protein FtsZ. Acts by promoting interactions between FtsZ protofilaments and suppressing the GTPase activity of FtsZ. The polypeptide is Cell division protein ZapC (Pseudoalteromonas translucida (strain TAC 125)).